A 371-amino-acid polypeptide reads, in one-letter code: Queuine tRNA-ribosyltransferase (371 aa).

Asp-90 acts as the Proton acceptor in catalysis. Substrate is bound by residues 90–94 (DSGGF), Asp-144, Gln-189, and Gly-215. Residues 246 to 252 (GVGTPEN) form an RNA binding region. Asp-265 serves as the catalytic Nucleophile. The interval 270 to 274 (TRNAR) is RNA binding; important for wobble base 34 recognition. The Zn(2+) site is built by Cys-303, Cys-305, Cys-308, and His-334.

The protein belongs to the queuine tRNA-ribosyltransferase family. In terms of assembly, homodimer. Within each dimer, one monomer is responsible for RNA recognition and catalysis, while the other monomer binds to the replacement base PreQ1. Zn(2+) serves as cofactor.

The enzyme catalyses 7-aminomethyl-7-carbaguanine + guanosine(34) in tRNA = 7-aminomethyl-7-carbaguanosine(34) in tRNA + guanine. Its pathway is tRNA modification; tRNA-queuosine biosynthesis. Catalyzes the base-exchange of a guanine (G) residue with the queuine precursor 7-aminomethyl-7-deazaguanine (PreQ1) at position 34 (anticodon wobble position) in tRNAs with GU(N) anticodons (tRNA-Asp, -Asn, -His and -Tyr). Catalysis occurs through a double-displacement mechanism. The nucleophile active site attacks the C1' of nucleotide 34 to detach the guanine base from the RNA, forming a covalent enzyme-RNA intermediate. The proton acceptor active site deprotonates the incoming PreQ1, allowing a nucleophilic attack on the C1' of the ribose to form the product. After dissociation, two additional enzymatic reactions on the tRNA convert PreQ1 to queuine (Q), resulting in the hypermodified nucleoside queuosine (7-(((4,5-cis-dihydroxy-2-cyclopenten-1-yl)amino)methyl)-7-deazaguanosine). The sequence is that of Queuine tRNA-ribosyltransferase from Helicobacter pylori (strain HPAG1).